We begin with the raw amino-acid sequence, 355 residues long: MSLVIPESPMFEVANNGKKSSRVYIKNLHFNTSEEELEVFLKKYEPRHRPFGIAYAEFSSVEQASKVVKDLNGALFKDRQIFVKLHVPFSPTGKPIFGRRKTSSGAEKLGDASNKVNLSAKTDKPLSSDTKDFDGVASTVPRSINIEDIPFTDEPKKVQDEDVQKKLSNDTIFIGNAVDKTVDKDVREFFKDYYPTQVFIFRGANQKRMQRTISLRQKTVSVLVTLKKEEDLSKAISELNSKKLNGRAVYLKAAHLSKIEEVVNAAKITAVPSKSPPTTATADDEAQEQKGNTTAETSTLLEMFKDTQKKIQGKYKETIEKQIRPSDTPLGEEEEEEEEGDETKQGVPNEEMIVA.

RRM domains lie at 21 to 88 and 170 to 256; these read SRVY…LHVP and DTIF…AAHL. Disordered stretches follow at residues 272-299 and 314-355; these read PSKS…ETST and KYKE…MIVA. The span at 289-299 shows a compositional bias: polar residues; sequence QKGNTTAETST. Positions 314-324 are enriched in basic and acidic residues; sequence KYKETIEKQIR. A compositionally biased stretch (acidic residues) spans 330–341; that stretch reads LGEEEEEEEEGD.

This sequence belongs to the RRT5 family.

May be involved in the modulation of rDNA transcription. This is Regulator of rDNA transcription protein 5 (RRT5) from Debaryomyces hansenii (strain ATCC 36239 / CBS 767 / BCRC 21394 / JCM 1990 / NBRC 0083 / IGC 2968) (Yeast).